A 147-amino-acid polypeptide reads, in one-letter code: Hemoglobin subunit beta-Y (147 aa).

In terms of domain architecture, Globin spans H3 to H147. The heme b site is built by H64 and H93.

The protein belongs to the globin family. In terms of assembly, heterotetramer of two alpha chains and two beta chains.

Its function is as follows. This is a minor early embryonic beta chain. In Mesocricetus auratus (Golden hamster), this protein is Hemoglobin subunit beta-Y (HBBY).